A 584-amino-acid chain; its full sequence is Vesicular glutamate transporter 2.1 (584 aa).

The Cytoplasmic segment spans residues Met-1–Tyr-70. Residues Ile-71–Gly-91 form a helical membrane-spanning segment. The Vesicular portion of the chain corresponds to Val-92–Val-124. 2 N-linked (GlcNAc...) asparagine glycosylation sites follow: Asn-99 and Asn-100. The chain crosses the membrane as a helical span at residues Gly-125–Ile-145. At Ser-146–Arg-148 the chain is on the cytoplasmic side. The chain crosses the membrane as a helical span at residues Leu-149–Ile-169. Over Pro-170–Tyr-177 the chain is Vesicular. A helical membrane pass occupies residues Gly-178 to Cys-198. The Cytoplasmic segment spans residues His-199–Thr-216. A helical membrane pass occupies residues Thr-217 to Val-237. The Vesicular portion of the chain corresponds to Gln-238–Ser-244. Residues Val-245–Tyr-265 form a helical membrane-spanning segment. The Cytoplasmic portion of the chain corresponds to Glu-266–Met-310. Residues Pro-311–Ile-331 traverse the membrane as a helical segment. Topologically, residues Ser-332 to Gly-349 are vesicular. A helical transmembrane segment spans residues Met-350 to Ala-370. The Cytoplasmic segment spans residues Asp-371–Lys-386. The chain crosses the membrane as a helical span at residues Ile-387–His-407. The Vesicular portion of the chain corresponds to Ser-408 to Lys-409. Residues Gly-410 to Phe-430 traverse the membrane as a helical segment. The Cytoplasmic segment spans residues Asn-431–Leu-445. Residues Met-446 to Ala-466 form a helical membrane-spanning segment. Residues Met-467 to Gln-477 are Vesicular-facing. The helical transmembrane segment at Tyr-478 to Ala-498 threads the bilayer. Over Ser-499 to Ser-584 the chain is Cytoplasmic.

Belongs to the major facilitator superfamily. Sodium/anion cotransporter family. VGLUT subfamily. Expressed in spinal cord and retinal ganglion cells.

Its subcellular location is the cytoplasmic vesicle. It is found in the secretory vesicle. It localises to the synaptic vesicle membrane. The protein resides in the membrane. The protein localises to the synapse. Its subcellular location is the synaptosome. It is found in the cell membrane. The catalysed reaction is L-glutamate(out) = L-glutamate(in). It catalyses the reaction 3 Na(+)(out) + phosphate(out) = 3 Na(+)(in) + phosphate(in). The enzyme catalyses phosphate(in) = phosphate(out). It carries out the reaction K(+)(in) + H(+)(out) = K(+)(out) + H(+)(in). The catalysed reaction is chloride(in) = chloride(out). With respect to regulation, chloride channel activity is allosterically activated by lumenal H(+) and Cl(-) leading to synaptic vesicles acidification. The L-glutamate transport activity is allosterically activated by lumenal H(+) and Cl(-). The allosteric requirement for H(+) efficiently prevents non-vesicular efflux across the plasma membrane. The L-glutamate uniporter activity exhibits a biphasic dependence on chloride concentration. Functionally, multifunctional transporter that transports L-glutamate as well as multiple ions such as chloride, proton, potassium, sodium and phosphate. At the synaptic vesicle membrane, mainly functions as a uniporter which transports preferentially L-glutamate but also, phosphate from the cytoplasm into synaptic vesicles at presynaptic nerve terminals of excitatory neural cells. The L-glutamate or phosphate uniporter activity is electrogenic and is driven by the proton electrochemical gradient, mainly by the electrical gradient established by the vacuolar H(+)-ATPase across the synaptic vesicle membrane. In addition, functions as a chloride channel that allows a chloride permeation through the synaptic vesicle membrane therefore affects the proton electrochemical gradient and promotes synaptic vesicles acidification. Moreover, functions as a vesicular K(+)/H(+) antiport allowing to maintain the electrical gradient and to decrease chemical gradient and therefore sustain vesicular L-glutamate uptake. The vesicular H(+)/H(+) antiport activity is electroneutral. At the plasma membrane, following exocytosis, functions as a symporter of Na(+) and phosphate from the extracellular space to the cytoplasm allowing synaptic phosphate homeostasis regulation. The symporter activity is driven by an inside negative membrane potential and is electrogenic. Also involved in the regulation of retinal hyaloid vessel regression during postnatal development. May also play a role in the endocrine L-glutamatergic system of other tissues such as pineal gland and pancreas. Required for glutamate release by retinotectal synapses and visual acuity. This Danio rerio (Zebrafish) protein is Vesicular glutamate transporter 2.1 (slc17a6b).